A 948-amino-acid chain; its full sequence is Hexagonally packed intermediate-layer surface protein (948 aa).

The first 17 residues, 1 to 17 (MKKNIALMALTGILTLA), serve as a signal peptide directing secretion. 2 disulfides stabilise this stretch: Cys-168-Cys-187 and Cys-554-Cys-666.

Glycosylated. Contains tightly bound reducing sugars (six per polypeptide chain) and fatty acids (covalently bound and located in the N-terminal region).

It is found in the secreted. The protein localises to the cell wall. Its subcellular location is the S-layer. Functionally, shape maintenance, possible protection from noxious enzymes or exogenous and unsettling DNA, and may mediate homotypic cell-cell contacts. This chain is Hexagonally packed intermediate-layer surface protein (hpi), found in Deinococcus radiodurans (strain ATCC 13939 / DSM 20539 / JCM 16871 / CCUG 27074 / LMG 4051 / NBRC 15346 / NCIMB 9279 / VKM B-1422 / R1).